A 295-amino-acid polypeptide reads, in one-letter code: 2-dehydropantoate 2-reductase (295 aa).

NADP(+) contacts are provided by residues 9 to 14, N100, and A126; that span reads GPGAVG. N100 contacts substrate. The Proton donor role is filled by K177. Residues N181 and S246 each contribute to the substrate site. NADP(+) is bound at residue E258.

This sequence belongs to the ketopantoate reductase family.

It is found in the cytoplasm. The catalysed reaction is (R)-pantoate + NADP(+) = 2-dehydropantoate + NADPH + H(+). It participates in cofactor biosynthesis; (R)-pantothenate biosynthesis; (R)-pantoate from 3-methyl-2-oxobutanoate: step 2/2. Its function is as follows. Catalyzes the NADPH-dependent reduction of ketopantoate into pantoic acid. This chain is 2-dehydropantoate 2-reductase, found in Mycobacterium tuberculosis (strain CDC 1551 / Oshkosh).